The sequence spans 610 residues: MRVSAGLMIGGSCVATAATILNAFLINKQFYPSIVYLSKSNASMAVIYVQGIVLVYLMFQLLKSILFGDLRAAEAEHLSERTWHAVLETCLAFTVFRDDFSAIFVMQFIGLLFIKCFHWLADDRVDMMERSPVITLRFHLRMMTVLAALGFADSYFVSSAYFTTITRGASAQIVFGFEYAILLALVLHVTIKYLLHMHDLRNPQSWDNKAVYLLYAELFINLIRCLLYGFFAVVMLRVHTFPLFSVRPFYQSVRALHKAFLDVILSRRAINAMNSQFPVVSAEDLAAMDATCIICREEMTVDASPKRLPCSHVFHAHCLRSWFQRQQTCPTCRTDIWQGRNGAAAGGNAADAAANVADANVAGAQIGAGMPPFLPFLGHQFGFPQQPAGAGGAQPGAAQAGGQPGPFPHQIFYAPAPANRPEFMNLIPPPPLPMAGPPGMFPMMPPPPLPQVNTTQGTSSETPPVNPSYSQLSTEELRRMEGESREALLARLQAMDNIMVLLESAQMQMIQLATVTPIRPRPVVPSDESEQEAPGPSTDQVTSEEQEIPATSSAPSIFRTESPSTSSTAPSTSSPVTASSTPTTSSTRTPEAEEVRQRRLARLLGENANQ.

Positions 1 to 23 (MRVSAGLMIGGSCVATAATILNA) are cleaved as a signal peptide. Residues 24–41 (FLINKQFYPSIVYLSKSN) are Lumenal-facing. Residues 42 to 62 (ASMAVIYVQGIVLVYLMFQLL) traverse the membrane as a helical segment. The Cytoplasmic portion of the chain corresponds to 63 to 99 (KSILFGDLRAAEAEHLSERTWHAVLETCLAFTVFRDD). A helical transmembrane segment spans residues 100–120 (FSAIFVMQFIGLLFIKCFHWL). Topologically, residues 121-144 (ADDRVDMMERSPVITLRFHLRMMT) are lumenal. The helical transmembrane segment at 145–165 (VLAALGFADSYFVSSAYFTTI) threads the bilayer. At 166–170 (TRGAS) the chain is on the cytoplasmic side. The chain crosses the membrane as a helical span at residues 171-191 (AQIVFGFEYAILLALVLHVTI). Over 192 to 215 (KYLLHMHDLRNPQSWDNKAVYLLY) the chain is Lumenal. The chain crosses the membrane as a helical span at residues 216 to 236 (AELFINLIRCLLYGFFAVVML). Residues 237 to 610 (RVHTFPLFSV…ARLLGENANQ (374 aa)) are Cytoplasmic-facing. The RING-type; atypical zinc finger occupies 292–333 (CIICREEMTVDASPKRLPCSHVFHAHCLRSWFQRQQTCPTCR). Disordered regions lie at residues 386–408 (QPAGAGGAQPGAAQAGGQPGPFP), 452–480 (VNTTQGTSSETPPVNPSYSQLSTEELRRM), and 521–610 (RPVV…NANQ). Positions 452–474 (VNTTQGTSSETPPVNPSYSQLST) are enriched in polar residues. Positions 560–589 (TESPSTSSTAPSTSSPVTASSTPTTSSTRT) are enriched in low complexity.

This sequence belongs to the HRD1 family. As to quaternary structure, homodimer.

The protein resides in the endoplasmic reticulum membrane. The enzyme catalyses S-ubiquitinyl-[E2 ubiquitin-conjugating enzyme]-L-cysteine + [acceptor protein]-L-lysine = [E2 ubiquitin-conjugating enzyme]-L-cysteine + N(6)-ubiquitinyl-[acceptor protein]-L-lysine.. Its pathway is protein modification; protein ubiquitination. In terms of biological role, acts as an E3 ubiquitin-protein ligase which accepts ubiquitin specifically from endoplasmic reticulum-associated ubc-7 E2 ligase and transfers it to substrates, promoting their degradation. Component of the endoplasmic reticulum quality control (ERQC) system, which is also called the ER-associated degradation (ERAD) system, involved in ubiquitin-dependent degradation of misfolded endoplasmic reticulum proteins. Also promotes the degradation of normal but naturally short-lived proteins. Protects cells from ER stress-induced apoptosis. Thought to play a role together with hsp-3 in developmental growth and function of intestinal cells and to play a role together with hsp-4 in gonad formation. Plays a key role in the degradation of the potassium channel slo-1, perhaps acting directly, in targeting slo-1 to the ER-associated degradation pathway (ERAD), and also indirectly, via activation of the transcription factor skn-1, which mediates proteasomal homeostasis. This chain is E3 ubiquitin-protein ligase hrd-1 (sel-11), found in Caenorhabditis elegans.